A 310-amino-acid polypeptide reads, in one-letter code: Apolipoprotein E (310 aa).

The N-terminal stretch at 1-18 (MKVLWPALVVTLLAGCRA) is a signal peptide. 8 repeat units span residues 77–98 (ALMD…EQLG), 99–120 (PVAE…ARLG), 121–142 (ADME…AMVG), 143–164 (QSTE…KRLL), 165–186 (RDAE…EGAE), 187–208 (RSVN…TMHT), 209–226 (LVSK…QRLR), and 227–248 (GRLE…EQVQ). The interval 77-248 (ALMDDTMKEV…RLDEVREQVQ (172 aa)) is 8 X 22 AA approximate tandem repeats. The tract at residues 155–165 (HLRKLRKRLLR) is LDL and other lipoprotein receptors binding. Position 159–162 (159–162 (LRKR)) interacts with heparin. The interval 207–283 (HTLVSKPLQE…SWFEPLVQDM (77 aa)) is lipid-binding and lipoprotein association. 222–229 (AQRLRGRL) lines the heparin pocket. The homooligomerization stretch occupies residues 259 to 310 (NQVRLQAEAFQGRLKSWFEPLVQDMQQKWAELVEKVQLALRAVPTSVPSEKQ). Residues 271-283 (RLKSWFEPLVQDM) are specificity for association with VLDL.

Belongs to the apolipoprotein A1/A4/E family. As to quaternary structure, homotetramer. May interact with ABCA1; functionally associated with ABCA1 in the biogenesis of HDLs. May interact with APP/A4 amyloid-beta peptide; the interaction is extremely stable in vitro but its physiological significance is unclear. May interact with MAPT. May interact with MAP2. In the cerebrospinal fluid, interacts with secreted SORL1. Interacts with PMEL; this allows the loading of PMEL luminal fragment on ILVs to induce fibril nucleation. APOE exists as multiple glycosylated and sialylated glycoforms within cells and in plasma. The extent of glycosylation and sialylation are tissue and context specific. Post-translationally, glycated in plasma VLDL. In terms of processing, phosphorylated by FAM20C in the extracellular medium.

It localises to the secreted. It is found in the extracellular space. Its subcellular location is the extracellular matrix. The protein localises to the extracellular vesicle. The protein resides in the endosome. It localises to the multivesicular body. APOE is an apolipoprotein, a protein associating with lipid particles, that mainly functions in lipoprotein-mediated lipid transport between organs via the plasma and interstitial fluids. APOE is a core component of plasma lipoproteins and is involved in their production, conversion and clearance. Apolipoproteins are amphipathic molecules that interact both with lipids of the lipoprotein particle core and the aqueous environment of the plasma. As such, APOE associates with chylomicrons, chylomicron remnants, very low density lipoproteins (VLDL) and intermediate density lipoproteins (IDL) but shows a preferential binding to high-density lipoproteins (HDL). It also binds a wide range of cellular receptors including the LDL receptor/LDLR and the very low-density lipoprotein receptor/VLDLR that mediate the cellular uptake of the APOE-containing lipoprotein particles. Finally, APOE also has a heparin-binding activity and binds heparan-sulfate proteoglycans on the surface of cells, a property that supports the capture and the receptor-mediated uptake of APOE-containing lipoproteins by cells. The chain is Apolipoprotein E (APOE) from Dicerorhinus sumatrensis harrissoni (Bornean rhinoceros).